The sequence spans 231 residues: Small ribosomal subunit protein uS3 (231 aa).

Residues 17–86 enclose the KH type-2 domain; sequence VEQYLNKELK…SPQVEVQQVA (70 aa).

Belongs to the universal ribosomal protein uS3 family. In terms of assembly, part of the 30S ribosomal subunit.

Binds the lower part of the 30S subunit head. The sequence is that of Small ribosomal subunit protein uS3 from Methanocorpusculum labreanum (strain ATCC 43576 / DSM 4855 / Z).